The primary structure comprises 333 residues: tRNA(Ile)-lysidine synthase (333 aa).

Residue 33–38 (SGGADS) participates in ATP binding.

The protein belongs to the tRNA(Ile)-lysidine synthase family.

It is found in the cytoplasm. It carries out the reaction cytidine(34) in tRNA(Ile2) + L-lysine + ATP = lysidine(34) in tRNA(Ile2) + AMP + diphosphate + H(+). Ligates lysine onto the cytidine present at position 34 of the AUA codon-specific tRNA(Ile) that contains the anticodon CAU, in an ATP-dependent manner. Cytidine is converted to lysidine, thus changing the amino acid specificity of the tRNA from methionine to isoleucine. This is tRNA(Ile)-lysidine synthase from Salinispora tropica (strain ATCC BAA-916 / DSM 44818 / JCM 13857 / NBRC 105044 / CNB-440).